The primary structure comprises 279 residues: Early nodulin-like protein 18 (279 aa).

The N-terminal stretch at 1–24 (MAGAVATVSVGLAWLGLMAAAASA) is a signal peptide. In terms of domain architecture, Phytocyanin spans 25–133 (TQFRVGGGRG…GEKLVVVVMA (109 aa)). Cys82 and Cys121 are oxidised to a cystine. N-linked (GlcNAc...) asparagine glycosylation is present at Asn83. Residues 138 to 256 (RHAPPPSPPA…ANDRSGAAAA (119 aa)) are disordered. Residues 140 to 168 (APPPSPPAVPPPVAPVPMPSPASSPPSPA) are compositionally biased toward pro residues. A compositionally biased stretch (low complexity) spans 169-185 (PAAATPSLAPSPVATTP). A compositionally biased stretch (pro residues) spans 186-199 (SPSPSVSPMAPAPA). Low complexity-rich tracts occupy residues 212-226 (AAMA…GGVA) and 234-256 (TDGA…AAAA). A glycan (N-linked (GlcNAc...) asparagine) is linked at Asn238. Ser251 carries the GPI-anchor amidated serine lipid modification. The propeptide at 252 to 279 (GAAAAAPVVAGVVVTSLGAYIGYAMLAI) is removed in mature form.

The protein belongs to the early nodulin-like (ENODL) family. As to expression, specifically expressed in reproductive tissues. Mainly observed in developing seeds and in mature leaves.

It localises to the cell membrane. Its function is as follows. May act as a carbohydrate transporter. Promotes tolerance to salt stress in a redox-dependent manner. The chain is Early nodulin-like protein 18 from Oryza sativa subsp. japonica (Rice).